Here is a 394-residue protein sequence, read N- to C-terminus: Chalcone synthase 4 (394 aa).

The active site involves C165.

Belongs to the thiolase-like superfamily. Chalcone/stilbene synthases family.

The enzyme catalyses (E)-4-coumaroyl-CoA + 3 malonyl-CoA + 3 H(+) = 2',4,4',6'-tetrahydroxychalcone + 3 CO2 + 4 CoA. Its pathway is secondary metabolite biosynthesis; flavonoid biosynthesis. In terms of biological role, the primary product of this enzyme is 4,2',4',6'-tetrahydroxychalcone (also termed naringenin-chalcone or chalcone) which can under specific conditions spontaneously isomerize into naringenin. The polypeptide is Chalcone synthase 4 (CHS4) (Bromheadia finlaysoniana (Orchid)).